The sequence spans 358 residues: Methylthioribose-1-phosphate isomerase (358 aa).

Substrate is bound by residues 54–56 (RGA), Arg-96, and Gln-205. Asp-246 acts as the Proton donor in catalysis. Residue 256-257 (NK) coordinates substrate.

The protein belongs to the eIF-2B alpha/beta/delta subunits family. MtnA subfamily.

It carries out the reaction 5-(methylsulfanyl)-alpha-D-ribose 1-phosphate = 5-(methylsulfanyl)-D-ribulose 1-phosphate. The protein operates within amino-acid biosynthesis; L-methionine biosynthesis via salvage pathway; L-methionine from S-methyl-5-thio-alpha-D-ribose 1-phosphate: step 1/6. Catalyzes the interconversion of methylthioribose-1-phosphate (MTR-1-P) into methylthioribulose-1-phosphate (MTRu-1-P). This is Methylthioribose-1-phosphate isomerase from Pseudomonas aeruginosa (strain UCBPP-PA14).